A 344-amino-acid chain; its full sequence is Anthranilate phosphoribosyltransferase (344 aa).

5-phospho-alpha-D-ribose 1-diphosphate contacts are provided by residues glycine 79, 82–83 (GD), threonine 87, 89–92 (NIST), 107–115 (KHGNRSVSS), and serine 119. Position 79 (glycine 79) interacts with anthranilate. Serine 91 serves as a coordination point for Mg(2+). Residue asparagine 110 participates in anthranilate binding. Residue arginine 165 participates in anthranilate binding. Aspartate 224 and glutamate 225 together coordinate Mg(2+).

The protein belongs to the anthranilate phosphoribosyltransferase family. In terms of assembly, homodimer. It depends on Mg(2+) as a cofactor.

The catalysed reaction is N-(5-phospho-beta-D-ribosyl)anthranilate + diphosphate = 5-phospho-alpha-D-ribose 1-diphosphate + anthranilate. It functions in the pathway amino-acid biosynthesis; L-tryptophan biosynthesis; L-tryptophan from chorismate: step 2/5. In terms of biological role, catalyzes the transfer of the phosphoribosyl group of 5-phosphorylribose-1-pyrophosphate (PRPP) to anthranilate to yield N-(5'-phosphoribosyl)-anthranilate (PRA). The polypeptide is Anthranilate phosphoribosyltransferase (Salinibacter ruber (strain DSM 13855 / M31)).